Here is a 133-residue protein sequence, read N- to C-terminus: Small ribosomal subunit protein uS8 (133 aa).

This sequence belongs to the universal ribosomal protein uS8 family. In terms of assembly, part of the 30S ribosomal subunit. Contacts proteins S5 and S12.

Functionally, one of the primary rRNA binding proteins, it binds directly to 16S rRNA central domain where it helps coordinate assembly of the platform of the 30S subunit. The polypeptide is Small ribosomal subunit protein uS8 (Deinococcus geothermalis (strain DSM 11300 / CIP 105573 / AG-3a)).